A 40-amino-acid chain; its full sequence is Alpha-conotoxin-like Qc1.4b (40 aa).

Positions 1–19 are excised as a propeptide; it reads SDGRNTAANDKASDLMALR. Disulfide bonds link cysteine 22/cysteine 28 and cysteine 23/cysteine 36. A lacks the Ser-Xaa-Pro motif that is crucial for potent interaction with nAChR region spans residues 24 to 26; the sequence is PNP. Cysteine 36 carries the post-translational modification Cysteine amide. Positions 37-40 are excised as a propeptide; the sequence is GGGR.

This sequence belongs to the conotoxin A superfamily. As to expression, expressed by the venom duct.

Its subcellular location is the secreted. Alpha-conotoxins act on postsynaptic membranes, they bind to the nicotinic acetylcholine receptors (nAChR) and thus inhibit them. Has possibly a distinct nAChR binding mode from other alpha-conotoxins, due to a different three residue motif (lacks the Ser-Xaa-Pro motif). In Conus quercinus (Oak cone), this protein is Alpha-conotoxin-like Qc1.4b.